The primary structure comprises 388 residues: Putrescine N-methyltransferase 1 (388 aa).

Composition is skewed to polar residues over residues 1–14 (MEVI…STIF), 23–39 (GYQN…QNGT), and 46–88 (HQNG…GNEL). Residues 1–88 (MEVISTNTNG…TISHDNGNEL (88 aa)) are disordered. The PABS domain maps to 99–336 (PGWFSEFSAL…GVIGYMLCST (238 aa)). S-adenosyl-L-methionine is bound by residues glutamine 130, glutamate 205, and 236–237 (DG). Catalysis depends on aspartate 255, which acts as the Proton acceptor. Tyrosine 324 provides a ligand contact to S-adenosyl-L-methionine.

It belongs to the class I-like SAM-binding methyltransferase superfamily. Spermidine/spermine synthase family. Mainly expressed in roots.

The enzyme catalyses putrescine + S-adenosyl-L-methionine = N-methylputrescine + S-adenosyl-L-homocysteine + H(+). Its pathway is alkaloid biosynthesis; nicotine biosynthesis. Functionally, involved in the biosynthesis of pyridine alkaloid natural products, leading mainly to the production of anabasine, anatabine, nicotine and nornicotine, effective deterrents against herbivores with antiparasitic and pesticide properties (neurotoxins); nornicotine serves as the precursor in the synthesis of the carcinogen compound N'-nitrosonornicotine (NNN). Methyltransferase that mediates the conversion of putrescine to N-methylputrescine. In Nicotiana attenuata (Coyote tobacco), this protein is Putrescine N-methyltransferase 1.